Reading from the N-terminus, the 172-residue chain is Large ribosomal subunit protein uL10 (172 aa).

This sequence belongs to the universal ribosomal protein uL10 family. As to quaternary structure, part of the ribosomal stalk of the 50S ribosomal subunit. The N-terminus interacts with L11 and the large rRNA to form the base of the stalk. The C-terminus forms an elongated spine to which L12 dimers bind in a sequential fashion forming a multimeric L10(L12)X complex.

Forms part of the ribosomal stalk, playing a central role in the interaction of the ribosome with GTP-bound translation factors. This chain is Large ribosomal subunit protein uL10, found in Rhizobium etli (strain ATCC 51251 / DSM 11541 / JCM 21823 / NBRC 15573 / CFN 42).